We begin with the raw amino-acid sequence, 251 residues long: Aliphatic sulfonates import ATP-binding protein SsuB (251 aa).

The region spanning 3 to 231 (VSINEVSKYF…PRSKNSESFQ (229 aa)) is the ABC transporter domain. 39-46 (GPSGCGKS) contacts ATP.

The protein belongs to the ABC transporter superfamily. Aliphatic sulfonates importer (TC 3.A.1.17.2) family. The complex is composed of two ATP-binding proteins (SsuB), two transmembrane proteins (SsuC) and a solute-binding protein (SsuA).

Its subcellular location is the cell membrane. It catalyses the reaction ATP + H2O + aliphatic sulfonate-[sulfonate-binding protein]Side 1 = ADP + phosphate + aliphatic sulfonateSide 2 + [sulfonate-binding protein]Side 1.. In terms of biological role, part of the ABC transporter complex SsuABC involved in aliphatic sulfonates import. Responsible for energy coupling to the transport system. This chain is Aliphatic sulfonates import ATP-binding protein SsuB, found in Bacillus cereus (strain ZK / E33L).